The chain runs to 350 residues: FAD:protein FMN transferase (350 aa).

The signal sequence occupies residues 1-19; that stretch reads MKMTFCRAVCLAAAFLLMG. A lipid anchor (N-palmitoyl cysteine) is attached at cysteine 20. Cysteine 20 carries the S-diacylglycerol cysteine lipid modification. FAD contacts are provided by residues methionine 41, tyrosine 78, 119 to 121, and aspartate 181; that span reads AMD. Residue threonine 184 coordinates Mg(2+). Glutamate 187 and isoleucine 272 together coordinate FAD. Aspartate 298, aspartate 301, and threonine 302 together coordinate Mg(2+).

It belongs to the ApbE family. In terms of assembly, homodimer. The cofactor is Mg(2+).

The protein localises to the cell inner membrane. It catalyses the reaction L-threonyl-[protein] + FAD = FMN-L-threonyl-[protein] + AMP + H(+). Its function is as follows. Flavin transferase that catalyzes the transfer of the FMN moiety of FAD and its covalent binding to the hydroxyl group of a threonine residue in a target flavoprotein such as NqrB and NqrC, two subunits of the NQR complex. This Salmonella typhimurium (strain LT2 / SGSC1412 / ATCC 700720) protein is FAD:protein FMN transferase.